Reading from the N-terminus, the 1429-residue chain is Probable ATP-dependent RNA helicase spindle-E (1429 aa).

The 168-residue stretch at 121 to 288 folds into the Helicase ATP-binding domain; the sequence is VNAINTHQVV…FSTKVSVPPV (168 aa). 134-141 serves as a coordination point for ATP; the sequence is GETGCGKT. The DEAH box signature appears at 234–237; that stretch reads DEVH. A Helicase C-terminal domain is found at 349 to 521; that stretch reads QSEQSYDDAK…NSVLKAKLLD (173 aa). The 64-residue stretch at 933-996 folds into the Tudor domain; the sequence is AGVLTKGMMV…RLMTKELLSQ (64 aa).

Belongs to the DEAD box helicase family. DEAH subfamily.

It localises to the cytoplasm. It carries out the reaction ATP + H2O = ADP + phosphate + H(+). Functionally, probable ATP-binding RNA helicase which plays a central role during spermatogenesis and oogenesis by repressing transposable elements and preventing their mobilization, which is essential for the germline integrity. Acts via the piRNA metabolic process, which mediates the repression of transposable elements during meiosis by forming complexes composed of piRNAs and Piwi and govern the methylation and subsequent repression of transposons. Involved in the repression of LTR retrotransposon copia. Also involved in telomere regulation by repressing specialized telomeric retroelements HeT-A, TAHRE, and TART; Drosophila telomeres being maintained by transposition of specialized telomeric retroelements. Involved in telomeric trans-silencing, a repression mechanism by which a transposon or a transgene inserted in subtelomeric heterochromatin has the capacity to repress in trans in the female germline, a homologous transposon, or transgene located in euchromatin. Involved in the repression of testis-expressed Stellate genes by the homologous Su(Ste) repeats. Required for anteroposterior and dorsoventral axis formation during oogenesis. This is Probable ATP-dependent RNA helicase spindle-E (spn-E) from Drosophila ananassae (Fruit fly).